The following is a 1384-amino-acid chain: CHD3-type chromatin-remodeling factor PICKLE (1384 aa).

Position 23 is a phosphoserine (Ser-23). Residues 49–96 form a PHD-type zinc finger; that stretch reads ENACQACGESTNLVSCNTCTYAFHAKCLVPPLKDASVENWRCPECVSP. 2 Chromo domains span residues 98 to 180 and 190 to 249; these read NEID…NSED and TTVD…RSKD. In terms of domain architecture, Helicase ATP-binding spans 285 to 471; that stretch reads RFSWSKQTHV…FMLMHFLDAG (187 aa). ATP is bound at residue 298-305; it reads DEMGLGKT. Residues 376–383 carry the Nuclear localization signal motif; sequence KKKKSGQI. Residues 422-425 carry the DEAH box motif; that stretch reads DEGH. Residues 599–760 enclose the Helicase C-terminal domain; that stretch reads LLDKMMVKLK…NINQEELDDI (162 aa). Residues 893 to 912 show a composition bias toward acidic residues; the sequence is AGLEDVSSDGDESYEAESTD. 4 disordered regions span residues 893–941, 1122–1152, 1313–1344, and 1365–1384; these read AGLE…TPLM, GLQGQNGSGGSNPGAQTNQNPGSVITGNNNA, SDQSKSHEDDTKPDLNNVEMKDTAEETKPLRG, and VDVKMEEAKEEEKPKNMVVD. Over residues 1138–1152 the composition is skewed to polar residues; the sequence is TNQNPGSVITGNNNA. Basic and acidic residues-rich tracts occupy residues 1316–1341 and 1367–1384; these read SKSHEDDTKPDLNNVEMKDTAEETKP and VKMEEAKEEEKPKNMVVD.

Belongs to the SNF2/RAD54 helicase family. As to quaternary structure, interacts with TAF12B. Mostly expressed in tissue undergoing significant differentiation (meristems and primordia) such as young seedlings, influorescent tissue and young siliques, but not in endosperm and seed coat (at protein level). Levels decrease as organs age. Also present in trichomes.

It localises to the nucleus. In terms of biological role, chromatin remodeling factor that represses the expression of embryonic trait genes (such as NFYB9/LEC1) upon and after seed germination and thus enables the developmental switch to post-germinative growth. Silences some MADS-box proteins such as PHE1 and PHE2. Plays a role during carpel differentiation. Regulates late processes in cytokinin signaling. This is CHD3-type chromatin-remodeling factor PICKLE (PKL) from Arabidopsis thaliana (Mouse-ear cress).